Here is a 334-residue protein sequence, read N- to C-terminus: Holliday junction branch migration complex subunit RuvB (334 aa).

A large ATPase domain (RuvB-L) region spans residues 4 to 184 (ADRLIQPQIQ…FGIPLRLEFY (181 aa)). ATP contacts are provided by residues R24, G65, K68, T69, T70, 131–133 (EDY), R174, Y184, and R221. Position 69 (T69) interacts with Mg(2+). The segment at 185–255 (NIKDLSTIVT…VAEHALDLLD (71 aa)) is small ATPAse domain (RuvB-S). Residues 258–334 (SEGFDYMDRK…YQHFELIKPE (77 aa)) form a head domain (RuvB-H) region. Residues R294, R313, and R318 each coordinate DNA.

The protein belongs to the RuvB family. In terms of assembly, homohexamer. Forms an RuvA(8)-RuvB(12)-Holliday junction (HJ) complex. HJ DNA is sandwiched between 2 RuvA tetramers; dsDNA enters through RuvA and exits via RuvB. An RuvB hexamer assembles on each DNA strand where it exits the tetramer. Each RuvB hexamer is contacted by two RuvA subunits (via domain III) on 2 adjacent RuvB subunits; this complex drives branch migration. In the full resolvosome a probable DNA-RuvA(4)-RuvB(12)-RuvC(2) complex forms which resolves the HJ.

The protein localises to the cytoplasm. The enzyme catalyses ATP + H2O = ADP + phosphate + H(+). In terms of biological role, the RuvA-RuvB-RuvC complex processes Holliday junction (HJ) DNA during genetic recombination and DNA repair, while the RuvA-RuvB complex plays an important role in the rescue of blocked DNA replication forks via replication fork reversal (RFR). RuvA specifically binds to HJ cruciform DNA, conferring on it an open structure. The RuvB hexamer acts as an ATP-dependent pump, pulling dsDNA into and through the RuvAB complex. RuvB forms 2 homohexamers on either side of HJ DNA bound by 1 or 2 RuvA tetramers; 4 subunits per hexamer contact DNA at a time. Coordinated motions by a converter formed by DNA-disengaged RuvB subunits stimulates ATP hydrolysis and nucleotide exchange. Immobilization of the converter enables RuvB to convert the ATP-contained energy into a lever motion, pulling 2 nucleotides of DNA out of the RuvA tetramer per ATP hydrolyzed, thus driving DNA branch migration. The RuvB motors rotate together with the DNA substrate, which together with the progressing nucleotide cycle form the mechanistic basis for DNA recombination by continuous HJ branch migration. Branch migration allows RuvC to scan DNA until it finds its consensus sequence, where it cleaves and resolves cruciform DNA. This Shewanella baltica (strain OS223) protein is Holliday junction branch migration complex subunit RuvB.